The sequence spans 247 residues: ATP synthase subunit a, chloroplastic (247 aa).

Transmembrane regions (helical) follow at residues 38-58, 95-115, 134-154, 199-219, and 220-240; these read QVLITSWFVITILLGSVIIAV, VPFIGTMFLFIFVSNWSGALL, INTTVALALLTSAAYFYAGLS, LVVVVLVSLVPLVVPIPVMFL, and GLFTSGIQALIFATLAAAYIG.

The protein belongs to the ATPase A chain family. In terms of assembly, F-type ATPases have 2 components, CF(1) - the catalytic core - and CF(0) - the membrane proton channel. CF(1) has five subunits: alpha(3), beta(3), gamma(1), delta(1), epsilon(1). CF(0) has four main subunits: a, b, b' and c.

Its subcellular location is the plastid. It localises to the chloroplast thylakoid membrane. Its function is as follows. Key component of the proton channel; it plays a direct role in the translocation of protons across the membrane. The polypeptide is ATP synthase subunit a, chloroplastic (Sorghum bicolor (Sorghum)).